We begin with the raw amino-acid sequence, 441 residues long: MKAAVDLKPTLTIIKTEKVDLELFPSPDMECADVPLLTPSSKEMMSQALKATFSGFTKEQQRLGIPKDPRQWTETHVRDWVMWAVNEFSLKGVDFQKFCMNGAALCALGKECFLELAPDFVGDILWEHLEILQKEDVKPYQVNGVNPTYPESRYTSDYFISYGIEHAQCVPPSEFSEPSFITESYQTLHPISSEELLSLKYENDYPSVILRDPLQTDTLQTDYFAIKQEVLTPDNMCMGRASRGKLGGQDSFESIESYDSCDRLTQSWSSQSSFNSLQRVPSYDSFDSEDYPAALPNHKPKGTFKDYVRDRADLNKDKPVIPAAALAGYTGSGPIQLWQFLLELLTDKSCQSFISWTGDGWEFKLSDPDEVARRWGKRKNKPKMNYEKLSRGLRYYYDKNIIHKTAGKRYVYRFVCDLQSLLGYTPEELHAMLDVKPDADE.

Lys8 and Lys15 each carry N6-acetyllysine; alternate. Glycyl lysine isopeptide (Lys-Gly) (interchain with G-Cter in SUMO2); alternate cross-links involve residues Lys8 and Lys15. Lys15 is covalently cross-linked (Glycyl lysine isopeptide (Lys-Gly) (interchain with G-Cter in SUMO); alternate). Thr38 is modified (phosphothreonine; by MAPK). One can recognise a PNT domain in the interval 51–136 (ATFSGFTKEQ…EHLEILQKED (86 aa)). The tract at residues 130 to 243 (EILQKEDVKP…DNMCMGRASR (114 aa)) is activation domain; required for transcription activation. Lys138 participates in a covalent cross-link: Glycyl lysine isopeptide (Lys-Gly) (interchain with G-Cter in SUMO2). At Tyr223 the chain carries Phosphotyrosine. Lys227 is covalently cross-linked (Glycyl lysine isopeptide (Lys-Gly) (interchain with G-Cter in SUMO)). A phosphoserine mark is found at Ser251 and Ser254. Thr265 carries the phosphothreonine modification. A phosphoserine mark is found at Ser267, Ser270, Ser282, and Ser285. The segment at 304–312 (FKDYVRDRA) is helix HI-1. Lys305 carries the post-translational modification N6-acetyllysine. Residues 323 to 330 (AAALAGYT) are helix HI-2. Residues 335–415 (IQLWQFLLEL…AGKRYVYRFV (81 aa)) constitute a DNA-binding region (ETS). Positions 418–422 (LQSLL) are helix H4. The segment at 426–432 (PEELHAM) is helix H5.

Belongs to the ETS family. In terms of assembly, binds DNA as a homodimer; homodimerization is required for transcription activation. Interacts with MAF and MAFB. Interacts with PAX5; the interaction alters DNA-binding properties. Interacts with DAXX. Interacts with UBE2I. Interacts with SP100; the interaction is direct and modulates ETS1 transcriptional activity. Sumoylated on Lys-15 and Lys-227, preferentially with SUMO2; which inhibits transcriptional activity. In terms of processing, ubiquitinated; which induces proteasomal degradation. Post-translationally, phosphorylation at Ser-251, Ser-282 and Ser-285 by CaMK2/CaMKII in response to calcium signaling decreases affinity for DNA: an increasing number of phosphoserines causes DNA-binding to become progressively weaker.

It is found in the nucleus. It localises to the cytoplasm. Its activity is regulated as follows. Autoinhibited by a module composed of four alpha helices (HI-1, HI-2, H4, and H5) that flank the DNA-binding ETS domain, reducing the affinity for DNA. Phosphorylation by CaMK2/CaMKII in response to calcium signaling decreases affinity for DNA. Functionally, transcription factor. Directly controls the expression of cytokine and chemokine genes in a wide variety of different cellular contexts. May control the differentiation, survival and proliferation of lymphoid cells. May also regulate angiogenesis through regulation of expression of genes controlling endothelial cell migration and invasion. The protein is Protein C-ets-1 (Ets1) of Rattus norvegicus (Rat).